The primary structure comprises 506 residues: GTPase Der (506 aa).

EngA-type G domains follow at residues 3 to 166 and 218 to 391; these read PVVA…GEQL and IKIA…ACAT. Residues 9–16, 56–60, 118–121, 224–231, 271–275, and 336–339 contribute to the GTP site; these read GRPNVGKS, DTGGI, NKTD, DTAGV, and NKWD. One can recognise a KH-like domain in the interval 392–476; it reads QKTSTSMLTR…PIRIQFQEGN (85 aa).

Belongs to the TRAFAC class TrmE-Era-EngA-EngB-Septin-like GTPase superfamily. EngA (Der) GTPase family. As to quaternary structure, associates with the 50S ribosomal subunit.

Functionally, GTPase that plays an essential role in the late steps of ribosome biogenesis. The sequence is that of GTPase Der from Actinobacillus pleuropneumoniae serotype 5b (strain L20).